The chain runs to 532 residues: Vesicular acetylcholine transporter unc-17 (532 aa).

Over 1-31 the chain is Cytoplasmic; that stretch reads MGFNVPVINRDSEILKADAKKWLEQQDNQKK. Residues 32–52 traverse the membrane as a helical segment; it reads CVLVIVSIALLLDNMLYMVIV. Residues 53–101 are Lumenal, vesicle-facing; it reads PIIPKYLRDIHNYQVTFEGYHNETSQLANGTYLVREVGGRINFLDEELE. 2 N-linked (GlcNAc...) asparagine glycosylation sites follow: Asn-74 and Asn-81. A helical membrane pass occupies residues 102 to 121; it reads LGWLFASKALLQIFVNPFSG. The Cytoplasmic portion of the chain corresponds to 122-130; it reads YIIDRVGYE. A helical membrane pass occupies residues 131 to 151; it reads IPMILGLCTMFFSTAIFALGK. At 152 to 160 the chain is on the lumenal, vesicle side; it reads SYGVLLFAR. A helical membrane pass occupies residues 161 to 180; it reads SLQGFGSAFADTSGLAMIAD. At 181–191 the chain is on the cytoplasmic side; sequence RFTEENERSAA. The chain crosses the membrane as a helical span at residues 192-213; sequence LGIALAFISFGCLVAPPFGSVL. Residues 214 to 219 are Lumenal, vesicle-facing; sequence YSLAGK. The helical transmembrane segment at 220 to 242 threads the bilayer; it reads PVPFLILSFVCLADAIAVFMVIN. Residues 243–266 lie on the Cytoplasmic side of the membrane; that stretch reads PHRRGTDSHGEKVQGTPMWRLFMD. A helical membrane pass occupies residues 267-286; sequence PFIACCSGALIMANVSLAFL. The Lumenal, vesicle segment spans residues 287–303; the sequence is EPTITTWMSEMMPDTPG. The helical transmembrane segment at 304-328 threads the bilayer; sequence WLVGVIWLPPFFPHVLGVYVTVKML. Over 329–335 the chain is Cytoplasmic; that stretch reads RAFPHHT. The helical transmembrane segment at 336–356 threads the bilayer; that stretch reads WAIAMVGLAMEGIACFAIPYT. At 357–367 the chain is on the lumenal, vesicle side; the sequence is TSVMQLVIPLS. The helical transmembrane segment at 368–388 threads the bilayer; the sequence is FVCFGIALIDTSLLPMLGHLV. Residues 389-393 lie on the Cytoplasmic side of the membrane; that stretch reads DTRHV. The chain crosses the membrane as a helical span at residues 394 to 412; the sequence is SVYGSVYAIADISYSLAYA. Over 413 to 418 the chain is Lumenal, vesicle; the sequence is FGPIIA. A helical transmembrane segment spans residues 419–440; it reads GWIVTNWGFTALNIIIFATNVT. Residues 441 to 532 are Cytoplasmic-facing; sequence YAPVLFLLRK…AGYDPLNPQW (92 aa).

It belongs to the major facilitator superfamily. Vesicular transporter family. In terms of tissue distribution, detected in most regions of the nervous system including the nerve ring, the ventral and dorsal nerve cords, and the pharyngeal nervous system. Expressed in most cholinergic neurons. In addition, expressed in SIA, SIB and SMB sublateral motor neurons.

It localises to the cytoplasmic vesicle. The protein resides in the secretory vesicle. It is found in the synaptic vesicle membrane. Functionally, involved in acetylcholine transport into synaptic vesicles. This is Vesicular acetylcholine transporter unc-17 from Caenorhabditis elegans.